Here is an 86-residue protein sequence, read N- to C-terminus: Large ribosomal subunit protein bL31 (86 aa).

Belongs to the bacterial ribosomal protein bL31 family. Type A subfamily. As to quaternary structure, part of the 50S ribosomal subunit.

Functionally, binds the 23S rRNA. The chain is Large ribosomal subunit protein bL31 from Parasynechococcus marenigrum (strain WH8102).